Consider the following 107-residue polypeptide: Integration host factor subunit beta (107 aa).

The interval 54-107 is disordered; the sequence is NRRPARVGRNPKSGEKVQVPEKHVPHFKPGKELRERVDGRAGEPLKNDEPEDGQ. The span at 65–101 shows a compositional bias: basic and acidic residues; the sequence is KSGEKVQVPEKHVPHFKPGKELRERVDGRAGEPLKND.

It belongs to the bacterial histone-like protein family. As to quaternary structure, heterodimer of an alpha and a beta chain.

This protein is one of the two subunits of integration host factor, a specific DNA-binding protein that functions in genetic recombination as well as in transcriptional and translational control. The sequence is that of Integration host factor subunit beta from Burkholderia thailandensis (strain ATCC 700388 / DSM 13276 / CCUG 48851 / CIP 106301 / E264).